A 232-amino-acid chain; its full sequence is tRNA (guanine-N(7)-)-methyltransferase (232 aa).

S-adenosyl-L-methionine is bound by residues Glu63, Glu88, Asp115, and Asp137. Asp137 is an active-site residue. Substrate is bound by residues Lys141, Asp173, and Thr211–Glu214.

This sequence belongs to the class I-like SAM-binding methyltransferase superfamily. TrmB family.

It carries out the reaction guanosine(46) in tRNA + S-adenosyl-L-methionine = N(7)-methylguanosine(46) in tRNA + S-adenosyl-L-homocysteine. Its pathway is tRNA modification; N(7)-methylguanine-tRNA biosynthesis. Functionally, catalyzes the formation of N(7)-methylguanine at position 46 (m7G46) in tRNA. This chain is tRNA (guanine-N(7)-)-methyltransferase, found in Chelativorans sp. (strain BNC1).